Here is a 380-residue protein sequence, read N- to C-terminus: Queuine tRNA-ribosyltransferase (380 aa).

The active-site Proton acceptor is the D96. Residues 96–100 (DSGGF), D150, Q193, and G220 each bind substrate. The segment at 251 to 257 (GVGAPDS) is RNA binding. Catalysis depends on D270, which acts as the Nucleophile. An RNA binding; important for wobble base 34 recognition region spans residues 275 to 279 (TRIAR). Residues C308, C310, C313, and H339 each coordinate Zn(2+).

This sequence belongs to the queuine tRNA-ribosyltransferase family. As to quaternary structure, homodimer. Within each dimer, one monomer is responsible for RNA recognition and catalysis, while the other monomer binds to the replacement base PreQ1. Zn(2+) is required as a cofactor.

The catalysed reaction is 7-aminomethyl-7-carbaguanine + guanosine(34) in tRNA = 7-aminomethyl-7-carbaguanosine(34) in tRNA + guanine. The protein operates within tRNA modification; tRNA-queuosine biosynthesis. Its function is as follows. Catalyzes the base-exchange of a guanine (G) residue with the queuine precursor 7-aminomethyl-7-deazaguanine (PreQ1) at position 34 (anticodon wobble position) in tRNAs with GU(N) anticodons (tRNA-Asp, -Asn, -His and -Tyr). Catalysis occurs through a double-displacement mechanism. The nucleophile active site attacks the C1' of nucleotide 34 to detach the guanine base from the RNA, forming a covalent enzyme-RNA intermediate. The proton acceptor active site deprotonates the incoming PreQ1, allowing a nucleophilic attack on the C1' of the ribose to form the product. After dissociation, two additional enzymatic reactions on the tRNA convert PreQ1 to queuine (Q), resulting in the hypermodified nucleoside queuosine (7-(((4,5-cis-dihydroxy-2-cyclopenten-1-yl)amino)methyl)-7-deazaguanosine). This Streptococcus gordonii (strain Challis / ATCC 35105 / BCRC 15272 / CH1 / DL1 / V288) protein is Queuine tRNA-ribosyltransferase.